Reading from the N-terminus, the 117-residue chain is Large ribosomal subunit protein uL22 (117 aa).

It belongs to the universal ribosomal protein uL22 family. As to quaternary structure, part of the 50S ribosomal subunit.

Functionally, this protein binds specifically to 23S rRNA; its binding is stimulated by other ribosomal proteins, e.g. L4, L17, and L20. It is important during the early stages of 50S assembly. It makes multiple contacts with different domains of the 23S rRNA in the assembled 50S subunit and ribosome. In terms of biological role, the globular domain of the protein is located near the polypeptide exit tunnel on the outside of the subunit, while an extended beta-hairpin is found that lines the wall of the exit tunnel in the center of the 70S ribosome. The polypeptide is Large ribosomal subunit protein uL22 (Lactobacillus helveticus (strain DPC 4571)).